A 383-amino-acid chain; its full sequence is S-(hydroxymethyl)glutathione dehydrogenase (383 aa).

C51 contacts Zn(2+). Residue H52 participates in NAD(+) binding. Zn(2+)-binding residues include H73, E74, C103, C106, C109, C117, and C180. NAD(+) contacts are provided by residues 205–210, D229, and 298–300; these read GAGCVG and IGV.

The protein belongs to the zinc-containing alcohol dehydrogenase family. Class-III subfamily. It depends on Zn(2+) as a cofactor.

The enzyme catalyses a primary alcohol + NAD(+) = an aldehyde + NADH + H(+). It catalyses the reaction a secondary alcohol + NAD(+) = a ketone + NADH + H(+). It carries out the reaction S-(hydroxymethyl)glutathione + NADP(+) = S-formylglutathione + NADPH + H(+). The catalysed reaction is S-(hydroxymethyl)glutathione + NAD(+) = S-formylglutathione + NADH + H(+). The enzyme catalyses S-nitrosoglutathione + NADH + H(+) = S-(hydroxysulfenamide)glutathione + NAD(+). Functionally, oxidizes long-chain alcohols and, in the presence of glutathione, is able to oxidize formaldehyde. Also acts as a S-nitroso-glutathione reductase by catalyzing the NADH-dependent reduction of S-nitrosoglutathione, thereby regulating protein S-nitrosylation. In Aspergillus oryzae (strain ATCC 42149 / RIB 40) (Yellow koji mold), this protein is S-(hydroxymethyl)glutathione dehydrogenase (FDH1).